Here is a 1045-residue protein sequence, read N- to C-terminus: Fibrosin-1-like protein (1045 aa).

The segment covering 1–12 (MEAKVRPSRRSR) has biased composition (basic residues). Disordered regions lie at residues 1-86 (MEAK…DGFA) and 99-315 (DMAL…THVP). A compositionally biased stretch (basic and acidic residues) spans 13–28 (AQRDRGRRREAARDAR). The segment covering 48 to 63 (GLRGAPPRGAAPAPRT) has biased composition (low complexity). Basic and acidic residues predominate over residues 99-123 (DMALKPHERKEKWERRLIKKPRESE). Polar residues predominate over residues 183–197 (EATSSRDPLSDSSAH). The span at 270–280 (HAAPCPGPPPG) shows a compositional bias: pro residues. Position 340 is a phosphoserine (Ser340). Over residues 443 to 457 (QHTHQHTHQHTHQHQ) the composition is skewed to basic residues. Disordered regions lie at residues 443 to 462 (QHTHQHTHQHTHQHQHTFAP) and 719 to 753 (EGSSVHGLPSPHEAWNRLHRAPPSFPAPPPWPKSV). The span at 741 to 750 (PSFPAPPPWP) shows a compositional bias: pro residues. The residue at position 790 (Ser790) is a Phosphoserine. 2 disordered regions span residues 809 to 880 (ELGR…APLQ) and 910 to 961 (AAAP…PALD). Over residues 817–837 (AEREAEPRVKESRSPAKEEAA) the composition is skewed to basic and acidic residues. Lys858 is covalently cross-linked (Glycyl lysine isopeptide (Lys-Gly) (interchain with G-Cter in SUMO2)). The segment covering 910-922 (AAAPAPGSAALLE) has biased composition (low complexity). Basic and acidic residues predominate over residues 923–949 (PPERPYRDREPHGYSPERLRGELERAR). Ser937 and Ser977 each carry phosphoserine. Thr989 and Thr1010 each carry phosphothreonine. The tract at residues 991 to 1045 (PAAAALGAPPPLVTAAGPPTPPGPPRSRTTPLGGLGPGEARDYSPSRNPPEVEAR) is disordered. Residues 998-1015 (APPPLVTAAGPPTPPGPP) show a composition bias toward pro residues. Basic and acidic residues predominate over residues 1029-1045 (EARDYSPSRNPPEVEAR).

It belongs to the AUTS2 family.

The protein is Fibrosin-1-like protein (FBRSL1) of Homo sapiens (Human).